The chain runs to 333 residues: uncharacterized protein (333 aa).

The Fe/B12 periplasmic-binding domain maps to 45–318 (NVIVSDSMFI…EYVKIIHPKI (274 aa)).

This is an uncharacterized protein from Methanocaldococcus jannaschii (strain ATCC 43067 / DSM 2661 / JAL-1 / JCM 10045 / NBRC 100440) (Methanococcus jannaschii).